The following is a 173-amino-acid chain: Transcription factor S-II-related protein (173 aa).

Residues isoleucine 9 to valine 129 enclose the TFIIS central domain. The segment at glutamate 130 to lysine 170 adopts a TFIIS-type zinc-finger fold. Zn(2+) is bound by residues cysteine 134, cysteine 137, cysteine 162, and cysteine 165.

Belongs to the TFS-II family.

This Acanthamoeba polyphaga mimivirus (APMV) protein is Transcription factor S-II-related protein.